The sequence spans 500 residues: Aspartyl/glutamyl-tRNA(Asn/Gln) amidotransferase subunit B (500 aa).

The protein belongs to the GatB/GatE family. GatB subfamily. Heterotrimer of A, B and C subunits.

It catalyses the reaction L-glutamyl-tRNA(Gln) + L-glutamine + ATP + H2O = L-glutaminyl-tRNA(Gln) + L-glutamate + ADP + phosphate + H(+). The catalysed reaction is L-aspartyl-tRNA(Asn) + L-glutamine + ATP + H2O = L-asparaginyl-tRNA(Asn) + L-glutamate + ADP + phosphate + 2 H(+). Allows the formation of correctly charged Asn-tRNA(Asn) or Gln-tRNA(Gln) through the transamidation of misacylated Asp-tRNA(Asn) or Glu-tRNA(Gln) in organisms which lack either or both of asparaginyl-tRNA or glutaminyl-tRNA synthetases. The reaction takes place in the presence of glutamine and ATP through an activated phospho-Asp-tRNA(Asn) or phospho-Glu-tRNA(Gln). In Clavibacter michiganensis subsp. michiganensis (strain NCPPB 382), this protein is Aspartyl/glutamyl-tRNA(Asn/Gln) amidotransferase subunit B.